Reading from the N-terminus, the 394-residue chain is Glycerol-1-phosphate dehydrogenase [NAD(P)+] (394 aa).

Residues Asp-54, 116–120 (GTIHD), and 138–141 (TAPS) each bind NAD(+). Residue Asp-143 coordinates substrate. Position 147 (Ser-147) interacts with NAD(+). Asp-190 provides a ligand contact to substrate. Ni(2+) contacts are provided by Asp-190 and His-270. His-274 is a binding site for substrate. His-290 provides a ligand contact to Ni(2+).

This sequence belongs to the glycerol-1-phosphate dehydrogenase family. In terms of assembly, homodimer. Ni(2+) is required as a cofactor.

The protein resides in the cytoplasm. The enzyme catalyses sn-glycerol 1-phosphate + NAD(+) = dihydroxyacetone phosphate + NADH + H(+). It catalyses the reaction sn-glycerol 1-phosphate + NADP(+) = dihydroxyacetone phosphate + NADPH + H(+). Its function is as follows. Catalyzes the NAD(P)H-dependent reduction of dihydroxyacetonephosphate (DHAP or glycerone phosphate) to glycerol 1-phosphate (G1P). The G1P thus generated is probably used for the synthesis of phosphoglycerolipids in Gram-positive bacterial species. Prefers NADH over NADPH as coenzyme. Is also able to catalyze the reverse reaction, i.e. the NAD(+)-dependent oxidation of G1P but not of G3P. Does not possess glycerol dehydrogenase activity. In Bacillus subtilis (strain 168), this protein is Glycerol-1-phosphate dehydrogenase [NAD(P)+] (egsA).